Reading from the N-terminus, the 72-residue chain is Translation initiation factor IF-1 (72 aa).

One can recognise an S1-like domain in the interval 1–72 (MSKTDVVEIE…TKGRIIWRDK (72 aa)).

Belongs to the IF-1 family. As to quaternary structure, component of the 30S ribosomal translation pre-initiation complex which assembles on the 30S ribosome in the order IF-2 and IF-3, IF-1 and N-formylmethionyl-tRNA(fMet); mRNA recruitment can occur at any time during PIC assembly.

The protein resides in the cytoplasm. Its function is as follows. One of the essential components for the initiation of protein synthesis. Stabilizes the binding of IF-2 and IF-3 on the 30S subunit to which N-formylmethionyl-tRNA(fMet) subsequently binds. Helps modulate mRNA selection, yielding the 30S pre-initiation complex (PIC). Upon addition of the 50S ribosomal subunit IF-1, IF-2 and IF-3 are released leaving the mature 70S translation initiation complex. This Lachnoclostridium phytofermentans (strain ATCC 700394 / DSM 18823 / ISDg) (Clostridium phytofermentans) protein is Translation initiation factor IF-1.